A 269-amino-acid chain; its full sequence is Hydroxyethylthiazole kinase (269 aa).

A substrate-binding site is contributed by methionine 46. Arginine 122 and threonine 168 together coordinate ATP. Glycine 195 is a substrate binding site.

This sequence belongs to the Thz kinase family. Mg(2+) is required as a cofactor.

It carries out the reaction 5-(2-hydroxyethyl)-4-methylthiazole + ATP = 4-methyl-5-(2-phosphooxyethyl)-thiazole + ADP + H(+). The protein operates within cofactor biosynthesis; thiamine diphosphate biosynthesis; 4-methyl-5-(2-phosphoethyl)-thiazole from 5-(2-hydroxyethyl)-4-methylthiazole: step 1/1. Its function is as follows. Catalyzes the phosphorylation of the hydroxyl group of 4-methyl-5-beta-hydroxyethylthiazole (THZ). The polypeptide is Hydroxyethylthiazole kinase (Geobacillus kaustophilus (strain HTA426)).